The primary structure comprises 226 residues: Guanylate kinase (226 aa).

In terms of domain architecture, Guanylate kinase-like spans 13–193 (GLLLVLSAPS…ALAQLQAIVR (181 aa)). 20 to 27 (APSGAGKT) serves as a coordination point for ATP.

It belongs to the guanylate kinase family.

It is found in the cytoplasm. The enzyme catalyses GMP + ATP = GDP + ADP. Its function is as follows. Essential for recycling GMP and indirectly, cGMP. The protein is Guanylate kinase of Anaeromyxobacter dehalogenans (strain 2CP-C).